A 137-amino-acid chain; its full sequence is Thioredoxin-like protein R548 (137 aa).

The Thioredoxin domain occupies 2-137; the sequence is SKDSVETNTI…LEKSIVESSQ (136 aa). Active-site nucleophile residues include Cys-61 and Cys-64. An intrachain disulfide couples Cys-61 to Cys-64.

This sequence belongs to the thioredoxin family.

In terms of biological role, participates in various redox reactions through the reversible oxidation of its active center dithiol to a disulfide and catalyzes dithiol-disulfide exchange reactions. The sequence is that of Thioredoxin-like protein R548 from Acanthamoeba polyphaga mimivirus (APMV).